The chain runs to 181 residues: 6,7-dimethyl-8-ribityllumazine synthase (181 aa).

5-amino-6-(D-ribitylamino)uracil is bound by residues Tyr27, 58 to 60 (ALE), and 87 to 89 (CVI). (2S)-2-hydroxy-3-oxobutyl phosphate is bound at residue 92 to 93 (ET). The Proton donor role is filled by His95. Asn120 is a binding site for 5-amino-6-(D-ribitylamino)uracil. Arg134 contributes to the (2S)-2-hydroxy-3-oxobutyl phosphate binding site.

This sequence belongs to the DMRL synthase family.

The catalysed reaction is (2S)-2-hydroxy-3-oxobutyl phosphate + 5-amino-6-(D-ribitylamino)uracil = 6,7-dimethyl-8-(1-D-ribityl)lumazine + phosphate + 2 H2O + H(+). It participates in cofactor biosynthesis; riboflavin biosynthesis; riboflavin from 2-hydroxy-3-oxobutyl phosphate and 5-amino-6-(D-ribitylamino)uracil: step 1/2. Functionally, catalyzes the formation of 6,7-dimethyl-8-ribityllumazine by condensation of 5-amino-6-(D-ribitylamino)uracil with 3,4-dihydroxy-2-butanone 4-phosphate. This is the penultimate step in the biosynthesis of riboflavin. The chain is 6,7-dimethyl-8-ribityllumazine synthase from Methylobacterium sp. (strain 4-46).